We begin with the raw amino-acid sequence, 274 residues long: Beta-lysine N(6)-acetyltransferase (274 aa).

Residues 123–274 form the N-acetyltransferase domain; the sequence is FHLKIANETD…DMNFWYKLSE (152 aa).

It belongs to the acetyltransferase family.

It carries out the reaction (3S)-3,6-diaminohexanoate + acetyl-CoA = (3S)-6-acetamido-3-aminohexanoate + CoA + H(+). Its function is as follows. Catalyzes the acetylation of beta-lysine to N6-acetyl-beta-lysine, a compatible solute produced by methanogenic archaea that helps cells to cope with salt stress. This Methanococcus maripaludis (strain DSM 14266 / JCM 13030 / NBRC 101832 / S2 / LL) protein is Beta-lysine N(6)-acetyltransferase.